Here is a 1349-residue protein sequence, read N- to C-terminus: Aldehyde oxidase 2 (1349 aa).

Residues 8 to 96 (DELVFFVNGR…GAAVTTVEGV (89 aa)) enclose the 2Fe-2S ferredoxin-type domain. Positions 47, 52, 55, and 78 each coordinate [2Fe-2S] cluster. Residue Gln117 coordinates Mo-molybdopterin. 4 residues coordinate [2Fe-2S] cluster: Cys118, Cys121, Cys153, and Cys155. Cys155 provides a ligand contact to Mo-molybdopterin. The 186-residue stretch at 240–425 (FYGERVTWIS…ESVHIPHSQK (186 aa)) folds into the FAD-binding PCMH-type domain. Residues 268-275 (LVVGNTSL), Ala349, Ser358, His362, Asp371, and Leu415 each bind FAD. Mo-molybdopterin is bound by residues 816 to 817 (GF), 1098 to 1101 (ASVG), Gln1213, and Leu1278. The active-site Proton acceptor; for azaheterocycle hydroxylase activity is Glu1280.

The protein belongs to the xanthine dehydrogenase family. Homodimer. [2Fe-2S] cluster is required as a cofactor. Requires FAD as cofactor. Mo-molybdopterin serves as cofactor. Only detected at very few levels in nasal mucosa.

It is found in the cytoplasm. The enzyme catalyses an aldehyde + O2 + H2O = a carboxylate + H2O2 + H(+). Oxidase with broad substrate specificity, oxidizing aromatic azaheterocycles, such as phthalazine, as well as aldehydes, such as benzaldehyde and retinal. The chain is Aldehyde oxidase 2 (AOX2) from Macaca fascicularis (Crab-eating macaque).